The sequence spans 118 residues: Large ribosomal subunit protein uL24 (118 aa).

The protein belongs to the universal ribosomal protein uL24 family. As to quaternary structure, part of the 50S ribosomal subunit.

In terms of biological role, one of two assembly initiator proteins, it binds directly to the 5'-end of the 23S rRNA, where it nucleates assembly of the 50S subunit. One of the proteins that surrounds the polypeptide exit tunnel on the outside of the subunit. This is Large ribosomal subunit protein uL24 from Prochlorococcus marinus (strain MIT 9301).